Here is a 317-residue protein sequence, read N- to C-terminus: Putative methyltransferase YMR310C (317 aa).

At serine 190 the chain carries Phosphoserine.

It belongs to the class IV-like SAM-binding methyltransferase superfamily.

It localises to the nucleus. In Saccharomyces cerevisiae (strain ATCC 204508 / S288c) (Baker's yeast), this protein is Putative methyltransferase YMR310C.